The sequence spans 76 residues: Small ribosomal subunit protein eS17 (76 aa).

The protein belongs to the eukaryotic ribosomal protein eS17 family.

This is Small ribosomal subunit protein eS17 from Picrophilus torridus (strain ATCC 700027 / DSM 9790 / JCM 10055 / NBRC 100828 / KAW 2/3).